Here is a 112-residue protein sequence, read N- to C-terminus: UPF0482 protein Ent638_1930 (112 aa).

Positions Met1–Ala27 are cleaved as a signal peptide.

This sequence belongs to the UPF0482 family.

This chain is UPF0482 protein Ent638_1930, found in Enterobacter sp. (strain 638).